Here is a 195-residue protein sequence, read N- to C-terminus: uncharacterized protein (195 aa).

The next 4 membrane-spanning stretches (helical) occupy residues 89–106 (SWISVLLIVTIIALPLLP), 111–128 (HLPLAVYLMVLAGYVWKR), 149–168 (VKISRVGAVYLLFLAVVLLL), and 172–194 (LNALVVLLLIAVSCAAFFLFLNI).

It is found in the cell membrane. This is an uncharacterized protein from Bacillus subtilis (strain 168).